The sequence spans 403 residues: Homoserine O-succinyltransferase (403 aa).

The disordered stretch occupies residues 1–31; sequence MTELQVDPAASADPAAAADTPRHPAATLPPD. Over residues 7–26 the composition is skewed to low complexity; the sequence is DPAASADPAAAADTPRHPAA. The region spanning 74-383 is the AB hydrolase-1 domain; that stretch reads NAVLICHALN…HGHDAFLLED (310 aa). The Nucleophile role is filled by Ser178. Position 248 (Arg248) interacts with substrate. Residues Asp343 and His376 contribute to the active site. Asp377 provides a ligand contact to substrate.

It belongs to the AB hydrolase superfamily. MetX family. In terms of assembly, homodimer.

It is found in the cytoplasm. It catalyses the reaction L-homoserine + succinyl-CoA = O-succinyl-L-homoserine + CoA. The protein operates within amino-acid biosynthesis; L-methionine biosynthesis via de novo pathway; O-succinyl-L-homoserine from L-homoserine: step 1/1. Its function is as follows. Transfers a succinyl group from succinyl-CoA to L-homoserine, forming succinyl-L-homoserine. The sequence is that of Homoserine O-succinyltransferase from Ralstonia nicotianae (strain ATCC BAA-1114 / GMI1000) (Ralstonia solanacearum).